A 181-amino-acid polypeptide reads, in one-letter code: UPF0398 protein LMHCC_0668 (181 aa).

It belongs to the UPF0398 family.

The protein is UPF0398 protein LMHCC_0668 of Listeria monocytogenes serotype 4a (strain HCC23).